The primary structure comprises 115 residues: T cell receptor beta variable 7-4 (115 aa).

Positions 1–21 (MGTRLLCWVVLGFLGTDHTGA) are cleaved as a signal peptide. The Ig-like domain maps to 22 to 115 (GVSQSPRYKV…SAVYLCASSL (94 aa)). Cys42 and Cys111 are disulfide-bonded. The tract at residues 67–97 (YSQSDAQRDKSGRPSGRFSAERPERSVSTLK) is disordered.

In terms of assembly, alpha-beta TR is a heterodimer composed of an alpha and beta chain; disulfide-linked. The alpha-beta TR is associated with the transmembrane signaling CD3 coreceptor proteins to form the TR-CD3 (TcR or TCR). The assembly of alpha-beta TR heterodimers with CD3 occurs in the endoplasmic reticulum where a single alpha-beta TR heterodimer associates with one CD3D-CD3E heterodimer, one CD3G-CD3E heterodimer and one CD247 homodimer forming a stable octameric structure. CD3D-CD3E and CD3G-CD3E heterodimers preferentially associate with TR alpha and TR beta chains, respectively. The association of the CD247 homodimer is the last step of TcR assembly in the endoplasmic reticulum and is required for transport to the cell surface.

Its subcellular location is the cell membrane. In terms of biological role, v region of the variable domain of T cell receptor (TR) beta chain that participates in the antigen recognition. Alpha-beta T cell receptors are antigen specific receptors which are essential to the immune response and are present on the cell surface of T lymphocytes. Recognize peptide-major histocompatibility (MH) (pMH) complexes that are displayed by antigen presenting cells (APC), a prerequisite for efficient T cell adaptive immunity against pathogens. Binding of alpha-beta TR to pMH complex initiates TR-CD3 clustering on the cell surface and intracellular activation of LCK that phosphorylates the ITAM motifs of CD3G, CD3D, CD3E and CD247 enabling the recruitment of ZAP70. In turn ZAP70 phosphorylates LAT, which recruits numerous signaling molecules to form the LAT signalosome. The LAT signalosome propagates signal branching to three major signaling pathways, the calcium, the mitogen-activated protein kinase (MAPK) kinase and the nuclear factor NF-kappa-B (NF-kB) pathways, leading to the mobilization of transcription factors that are critical for gene expression and essential for T cell growth and differentiation. The T cell repertoire is generated in the thymus, by V-(D)-J rearrangement. This repertoire is then shaped by intrathymic selection events to generate a peripheral T cell pool of self-MH restricted, non-autoaggressive T cells. Post-thymic interaction of alpha-beta TR with the pMH complexes shapes TR structural and functional avidity. The polypeptide is T cell receptor beta variable 7-4 (Homo sapiens (Human)).